The following is a 406-amino-acid chain: Succinylornithine transaminase (406 aa).

Lys252 carries the N6-(pyridoxal phosphate)lysine modification.

It belongs to the class-III pyridoxal-phosphate-dependent aminotransferase family. AstC subfamily. The cofactor is pyridoxal 5'-phosphate.

The enzyme catalyses N(2)-succinyl-L-ornithine + 2-oxoglutarate = N-succinyl-L-glutamate 5-semialdehyde + L-glutamate. The protein operates within amino-acid degradation; L-arginine degradation via AST pathway; L-glutamate and succinate from L-arginine: step 3/5. Catalyzes the transamination of N(2)-succinylornithine and alpha-ketoglutarate into N(2)-succinylglutamate semialdehyde and glutamate. Can also act as an acetylornithine aminotransferase. This is Succinylornithine transaminase from Escherichia coli O157:H7.